Here is a 241-residue protein sequence, read N- to C-terminus: NH(3)-dependent NAD(+) synthetase (241 aa).

Residue 27 to 34 (GISGGIDS) participates in ATP binding. Residue D33 participates in Mg(2+) binding. R109 provides a ligand contact to deamido-NAD(+). An ATP-binding site is contributed by T129. E134 is a binding site for Mg(2+). Deamido-NAD(+) contacts are provided by K142 and D149. ATP-binding residues include K158 and T180. Residue 231–232 (HK) coordinates deamido-NAD(+).

It belongs to the NAD synthetase family. As to quaternary structure, homodimer.

The catalysed reaction is deamido-NAD(+) + NH4(+) + ATP = AMP + diphosphate + NAD(+) + H(+). The protein operates within cofactor biosynthesis; NAD(+) biosynthesis; NAD(+) from deamido-NAD(+) (ammonia route): step 1/1. In terms of biological role, catalyzes the ATP-dependent amidation of deamido-NAD to form NAD. Uses ammonia as a nitrogen source. In Thermoplasma acidophilum (strain ATCC 25905 / DSM 1728 / JCM 9062 / NBRC 15155 / AMRC-C165), this protein is NH(3)-dependent NAD(+) synthetase.